The primary structure comprises 289 residues: YLVNPAAYAALGAYMFLLILIGFPVNFLTLYVTLEHKKLRTPLNYILLNLAVADLFMVLGGFTTTMYTSMHGYFVLGRLGCNLEGFFATLGGEIALWSLVVLAIERWIVVCKPISNFRFTEDHAIMGLAFSWVMALSCSVPPLVGWSRYIPEAMQCSCGVDYYTRAEGFNTESFVLYMFTVHFLIPLSVIFFCYGRLLCAVKEAAAAQQESETTQRSEKEVSRMVVLMVIGFLVCWLPYASTAWWIFCNQGSEFGPVFMTIPAFFAKSSAIYNPMIYICMNKQFRHCMI.

At 1-7 (YLVNPAA) the chain is on the extracellular side. The helical transmembrane segment at 8–32 (YAALGAYMFLLILIGFPVNFLTLYV) threads the bilayer. Residues 33–44 (TLEHKKLRTPLN) lie on the Cytoplasmic side of the membrane. A helical membrane pass occupies residues 45-67 (YILLNLAVADLFMVLGGFTTTMY). Residues 68-81 (TSMHGYFVLGRLGC) are Extracellular-facing. The cysteines at positions 81 and 158 are disulfide-linked. A helical membrane pass occupies residues 82–104 (NLEGFFATLGGEIALWSLVVLAI). Residues 105–107 (ERW) carry the 'Ionic lock' involved in activated form stabilization motif. At 105-123 (ERWIVVCKPISNFRFTEDH) the chain is on the cytoplasmic side. The helical transmembrane segment at 124–144 (AIMGLAFSWVMALSCSVPPLV) threads the bilayer. Residues 145 to 173 (GWSRYIPEAMQCSCGVDYYTRAEGFNTES) lie on the Extracellular side of the membrane. Residues 174–195 (FVLYMFTVHFLIPLSVIFFCYG) traverse the membrane as a helical segment. Over 196–223 (RLLCAVKEAAAAQQESETTQRSEKEVSR) the chain is Cytoplasmic. The helical transmembrane segment at 224-245 (MVVLMVIGFLVCWLPYASTAWW) threads the bilayer. The Extracellular segment spans residues 246–257 (IFCNQGSEFGPV). A helical transmembrane segment spans residues 258-279 (FMTIPAFFAKSSAIYNPMIYIC). Lys267 bears the N6-(retinylidene)lysine mark. Residues 280–289 (MNKQFRHCMI) are Cytoplasmic-facing.

The protein belongs to the G-protein coupled receptor 1 family. Opsin subfamily. In terms of processing, phosphorylated on some or all of the serine and threonine residues present in the C-terminal region. Contains one covalently linked retinal chromophore.

Its subcellular location is the membrane. The protein localises to the cell projection. It localises to the cilium. It is found in the photoreceptor outer segment. Its function is as follows. Photoreceptor required for image-forming vision at low light intensity. While most salt water fish species use retinal as chromophore, most freshwater fish use 3-dehydroretinal, or a mixture of retinal and 3-dehydroretinal. Light-induced isomerization of 11-cis to all-trans retinal triggers a conformational change that activates signaling via G-proteins. Subsequent receptor phosphorylation mediates displacement of the bound G-protein alpha subunit by arrestin and terminates signaling. The polypeptide is Rhodopsin (rho) (Comephorus dybowskii).